A 547-amino-acid polypeptide reads, in one-letter code: Chaperonin GroEL 1 (547 aa).

ATP is bound by residues 30-33, Lys51, 87-91, Gly415, and Asp496; these read TLGP and DGTTT.

This sequence belongs to the chaperonin (HSP60) family. As to quaternary structure, forms a cylinder of 14 subunits composed of two heptameric rings stacked back-to-back. Interacts with the co-chaperonin GroES.

The protein resides in the cytoplasm. It catalyses the reaction ATP + H2O + a folded polypeptide = ADP + phosphate + an unfolded polypeptide.. Functionally, together with its co-chaperonin GroES, plays an essential role in assisting protein folding. The GroEL-GroES system forms a nano-cage that allows encapsulation of the non-native substrate proteins and provides a physical environment optimized to promote and accelerate protein folding. The chain is Chaperonin GroEL 1 from Rhodopseudomonas palustris (strain ATCC BAA-98 / CGA009).